We begin with the raw amino-acid sequence, 1476 residues long: ABC transporter G family member 17 (1476 aa).

Disordered stretches follow at residues 13–45 (SENN…YDYD) and 68–91 (FREI…KPEN). The stretch at 14–67 (ENNNNNNNNNNNNNNNNNNNLNNNNDNDYDYDSINNIEEKFENVSKELEGQSIK) forms a coiled coil. Residues 15–39 (NNNNNNNNNNNNNNNNNNNLNNNND) are compositionally biased toward low complexity. The region spanning 151 to 402 (LNPFNYFKKD…FLDLGFDCEP (252 aa)) is the ABC transporter 1 domain. Positions 507-751 (WGDKFTLTSR…SLSVKGENYL (245 aa)) constitute an ABC transmembrane type-2 1 domain. 5 consecutive transmembrane segments (helical) span residues 517-537 (FLTI…QPLT), 547-567 (AIFT…HGAL), 592-612 (ILID…IVYF), 623-643 (FFIF…LFRG), and 764-784 (LNVV…LFAV). The ABC transporter 2 domain occupies 838 to 1082 (FSWKSISYTV…LTSYFERHGV (245 aa)). An ATP-binding site is contributed by 874-881 (GSSGAGKT). The next 6 helical transmembrane spans lie at 1182-1202 (FYTM…GFTF), 1219-1239 (SWEA…MFFI), 1260-1280 (LSMI…FFIA), 1298-1318 (WLMH…LGAA), 1322-1342 (IAIS…LCGV), and 1450-1470 (FGII…FVYL). Residues 1182 to 1405 (FYTMGSFAQS…TDCQTYSAPF (224 aa)) enclose the ABC transmembrane type-2 2 domain.

The protein belongs to the ABC transporter superfamily. ABCG family. PDR (TC 3.A.1.205) subfamily.

The protein localises to the membrane. In Dictyostelium discoideum (Social amoeba), this protein is ABC transporter G family member 17 (abcG17-1).